The primary structure comprises 287 residues: Light-independent protochlorophyllide reductase iron-sulfur ATP-binding protein (287 aa).

ATP-binding positions include 10 to 15 (GVGKST) and Lys-39. A Mg(2+)-binding site is contributed by Ser-14. The [4Fe-4S] cluster site is built by Cys-95 and Cys-129. Position 181 to 182 (181 to 182 (NR)) interacts with ATP.

This sequence belongs to the NifH/BchL/ChlL family. In terms of assembly, homodimer. Protochlorophyllide reductase is composed of three subunits; BchL, BchN and BchB. [4Fe-4S] cluster serves as cofactor.

It carries out the reaction chlorophyllide a + oxidized 2[4Fe-4S]-[ferredoxin] + 2 ADP + 2 phosphate = protochlorophyllide a + reduced 2[4Fe-4S]-[ferredoxin] + 2 ATP + 2 H2O. The protein operates within porphyrin-containing compound metabolism; bacteriochlorophyll biosynthesis (light-independent). Its function is as follows. Component of the dark-operative protochlorophyllide reductase (DPOR) that uses Mg-ATP and reduced ferredoxin to reduce ring D of protochlorophyllide (Pchlide) to form chlorophyllide a (Chlide). This reaction is light-independent. The L component serves as a unique electron donor to the NB-component of the complex, and binds Mg-ATP. The chain is Light-independent protochlorophyllide reductase iron-sulfur ATP-binding protein from Heliobacterium modesticaldum (strain ATCC 51547 / Ice1).